The primary structure comprises 254 residues: Dihydroorotate dehydrogenase B (NAD(+)), electron transfer subunit (254 aa).

The FAD-binding FR-type domain occupies methionine 1 to isoleucine 99. FAD-binding positions include arginine 50–serine 53, leucine 67–arginine 69, and glycine 74–threonine 75. [2Fe-2S] cluster-binding residues include cysteine 218, cysteine 223, cysteine 226, and cysteine 241.

Belongs to the PyrK family. As to quaternary structure, heterotetramer of 2 PyrK and 2 PyrD type B subunits. [2Fe-2S] cluster serves as cofactor. Requires FAD as cofactor.

It functions in the pathway pyrimidine metabolism; UMP biosynthesis via de novo pathway; orotate from (S)-dihydroorotate (NAD(+) route): step 1/1. Responsible for channeling the electrons from the oxidation of dihydroorotate from the FMN redox center in the PyrD type B subunit to the ultimate electron acceptor NAD(+). The chain is Dihydroorotate dehydrogenase B (NAD(+)), electron transfer subunit from Listeria monocytogenes serotype 4a (strain HCC23).